Here is a 226-residue protein sequence, read N- to C-terminus: ATP synthase subunit a (226 aa).

Helical transmembrane passes span 22–42 (SMNWLFMMLPIIIFPSIFWLI), 73–93 (IIIFISLMLYIMITNIFSLIP), 102–122 (LLLNMILSLTLWFSFLIYLIY), 135–155 (LNSPVFLMNFMVIIELISLII), 173–193 (LILTLLGIFISNFISILPINL), and 202–222 (LEIFMSMIQSYVFSILLILYF).

It belongs to the ATPase A chain family. In terms of assembly, F-type ATPases have 2 components, CF(1) - the catalytic core - and CF(0) - the membrane proton channel. CF(1) has five subunits: alpha(3), beta(3), gamma(1), delta(1), epsilon(1). CF(0) has three main subunits: a, b and c.

It localises to the mitochondrion inner membrane. Functionally, mitochondrial membrane ATP synthase (F(1)F(0) ATP synthase or Complex V) produces ATP from ADP in the presence of a proton gradient across the membrane which is generated by electron transport complexes of the respiratory chain. F-type ATPases consist of two structural domains, F(1) - containing the extramembraneous catalytic core and F(0) - containing the membrane proton channel, linked together by a central stalk and a peripheral stalk. During catalysis, ATP synthesis in the catalytic domain of F(1) is coupled via a rotary mechanism of the central stalk subunits to proton translocation. Key component of the proton channel; it may play a direct role in the translocation of protons across the membrane. This Apis mellifera ligustica (Common honeybee) protein is ATP synthase subunit a (ATP6).